We begin with the raw amino-acid sequence, 295 residues long: Tyrosine recombinase XerC (295 aa).

The Core-binding (CB) domain occupies 1–84 (MTLEEQFLSY…SLKSFYRLLT (84 aa)). The Tyr recombinase domain maps to 105-289 (KLPEFFYQDE…SMQHLTAEYR (185 aa)). Catalysis depends on residues R145, K169, H241, R244, and H267. Y276 (O-(3'-phospho-DNA)-tyrosine intermediate) is an active-site residue.

Belongs to the 'phage' integrase family. XerC subfamily. Forms a cyclic heterotetrameric complex composed of two molecules of XerC and two molecules of XerD.

It localises to the cytoplasm. Functionally, site-specific tyrosine recombinase, which acts by catalyzing the cutting and rejoining of the recombining DNA molecules. The XerC-XerD complex is essential to convert dimers of the bacterial chromosome into monomers to permit their segregation at cell division. It also contributes to the segregational stability of plasmids. This Lactobacillus leichmannii protein is Tyrosine recombinase XerC.